Reading from the N-terminus, the 418-residue chain is Lariat debranching enzyme (418 aa).

C8, H10, D39, and N84 together coordinate a divalent metal cation. The segment at 124 to 154 is lariat recognition loop; that stretch reads SGIYNERHYRSGHFERPPYNESTIRSVYHVR. A divalent metal cation-binding residues include H174, H226, and H228. The interval 372–418 is disordered; sequence GERTDIPASLAPSDLPTYDSEEIPIDDIDEIEEMEEAKADDHTRDDA. Residues 390–406 show a composition bias toward acidic residues; sequence DSEEIPIDDIDEIEEME. Basic and acidic residues predominate over residues 407–418; it reads EAKADDHTRDDA.

The protein belongs to the lariat debranching enzyme family. Fe(2+) is required as a cofactor. Requires Zn(2+) as cofactor. Mn(2+) serves as cofactor. As to expression, widely expressed. Expressed in roots, stems, cauline and rosette leaves, flower buds and siliques.

The protein localises to the nucleus. With respect to regulation, active in presence of diverse metals including Fe(2+), Zn(2+), Mn(2+). Binds two metal cations in two adjacent alpha and beta metal-binding pockets. Its function is as follows. Cleaves the 2'-5' phosphodiester linkage at the branch point of lariat intron pre-mRNAs after splicing and converts them into linear molecules that are subsequently degraded. It thereby facilitates ribonucleotide turnover. It may also participate in retrovirus replication via an RNA lariat intermediate in cDNA synthesis. Plays en essential role during embryogenesis. The protein is Lariat debranching enzyme (DBR1) of Arabidopsis thaliana (Mouse-ear cress).